A 201-amino-acid chain; its full sequence is Imidazoleglycerol-phosphate dehydratase (201 aa).

Belongs to the imidazoleglycerol-phosphate dehydratase family.

The protein localises to the cytoplasm. It catalyses the reaction D-erythro-1-(imidazol-4-yl)glycerol 3-phosphate = 3-(imidazol-4-yl)-2-oxopropyl phosphate + H2O. It functions in the pathway amino-acid biosynthesis; L-histidine biosynthesis; L-histidine from 5-phospho-alpha-D-ribose 1-diphosphate: step 6/9. This is Imidazoleglycerol-phosphate dehydratase from Synechococcus sp. (strain CC9311).